The following is a 198-amino-acid chain: Holliday junction branch migration complex subunit RuvA (198 aa).

The segment at 1 to 63 is domain I; the sequence is MYSYIIGVIT…EDASILYGFS (63 aa). Residues 64 to 142 form a domain II region; that stretch reads SQKERELFNL…KDFVPSEKPV (79 aa). The interval 143-153 is flexible linker; it reads NKEVKRSNDSE. The interval 153-198 is domain III; the sequence is EFAREALLQLGYFKNDVDAFIENTDISGLSIEDIMKKAMKSLDSSR.

The protein belongs to the RuvA family. In terms of assembly, homotetramer. Forms an RuvA(8)-RuvB(12)-Holliday junction (HJ) complex. HJ DNA is sandwiched between 2 RuvA tetramers; dsDNA enters through RuvA and exits via RuvB. An RuvB hexamer assembles on each DNA strand where it exits the tetramer. Each RuvB hexamer is contacted by two RuvA subunits (via domain III) on 2 adjacent RuvB subunits; this complex drives branch migration. In the full resolvosome a probable DNA-RuvA(4)-RuvB(12)-RuvC(2) complex forms which resolves the HJ.

It localises to the cytoplasm. The RuvA-RuvB-RuvC complex processes Holliday junction (HJ) DNA during genetic recombination and DNA repair, while the RuvA-RuvB complex plays an important role in the rescue of blocked DNA replication forks via replication fork reversal (RFR). RuvA specifically binds to HJ cruciform DNA, conferring on it an open structure. The RuvB hexamer acts as an ATP-dependent pump, pulling dsDNA into and through the RuvAB complex. HJ branch migration allows RuvC to scan DNA until it finds its consensus sequence, where it cleaves and resolves the cruciform DNA. The polypeptide is Holliday junction branch migration complex subunit RuvA (Finegoldia magna (strain ATCC 29328 / DSM 20472 / WAL 2508) (Peptostreptococcus magnus)).